The chain runs to 503 residues: MPSKTKYNLVDDGHDLRIPLHNEDAFQHGISFEAKYVGSLDVPRPNSRVEIVAAMRRIRYEFKAKNIKKKKVSIMVSVDGVKVILKKKKKKKEWTWDESKMLVMQDPIYRIFYVSHDSQDLKIFSYIARDGASNIFRCNVFKSKKKSQAMRIVRTVGQAFEVCHKLSLQHTQQNADGQEDGESERNSDGSGDPGRQLTGAERVSTAAAEETDIDAVEVPLPGNDILEFSRGVTDLDAVGKDGGSHIDSTVSPHPQEPMLTASPRMLLPSSSSKPPGLGTGTPLSTHHQMQLLQQLLQQQQQQTQVAVAQVHLLKDQLAAEAAARLEAQARVHQLLLQNKDMLQHISLLVKQVQELELKLSGQNTMGSQDSLLEITFRSGALPVLCESTTPKPEDLHSPLLGAGLADFAHPAGSPLGRHDCLVKLECFRFLPPEDTQPMMAQGEPLLGGLELIKFRESGIASEYESNTDESEERDSWSQEELPRLLNVLQRQELGDSLDDEIAV.

The PID domain occupies 26-191; sequence FQHGISFEAK…ESERNSDGSG (166 aa). The interval 170 to 212 is disordered; it reads HTQQNADGQEDGESERNSDGSGDPGRQLTGAERVSTAAAEETD. Phosphoserine occurs at positions 183, 187, 190, and 262. Residues 318–359 are a coiled coil; that stretch reads AAEAAARLEAQARVHQLLLQNKDMLQHISLLVKQVQELELKL. 4 positions are modified to phosphoserine: Ser-367, Ser-370, Ser-397, and Ser-413. Positions 491-503 are interaction with NOS1; sequence QELGDSLDDEIAV. The short motif at 501–503 is the PDZ-binding element; the sequence is IAV.

Interacts with the PDZ domain of NOS1 or the second PDZ domain of DLG4 through its C-terminus. Interacts with RASD1 and SYN1, SYN2 and SYN3 via its PID domain. Forms a ternary complex with NOS1 and SYN1. Forms a ternary complex with NOS1 and RASD1.

The protein resides in the cell projection. The protein localises to the filopodium. Its subcellular location is the podosome. Functionally, adapter protein involved in neuronal nitric-oxide (NO) synthesis regulation via its association with nNOS/NOS1. The complex formed with NOS1 and synapsins is necessary for specific NO and synapsin functions at a presynaptic level. Mediates an indirect interaction between NOS1 and RASD1 leading to enhance the ability of NOS1 to activate RASD1. Competes with DLG4 for interaction with NOS1, possibly affecting NOS1 activity by regulating the interaction between NOS1 and DLG4. In kidney podocytes, plays a role in podosomes and filopodia formation through CDC42 activation. In Mus musculus (Mouse), this protein is Carboxyl-terminal PDZ ligand of neuronal nitric oxide synthase protein.